The chain runs to 1084 residues: Putative tRNA-specific 2-thiouridylase (1084 aa).

3 consecutive transmembrane segments (helical) span residues 1-21, 32-52, and 309-329; these read MLIFFFFFFFFKYIYNIFILT, FIISFIFSTLMFFYFCTFYVI, and IITIDAYSNNLILYCFLYLIL. The active-site Nucleophile is Cys-538. Cys-538 and Cys-715 are oxidised to a cystine. Cys-715 serves as the catalytic Cysteine persulfide intermediate.

It belongs to the MnmA/TRMU family.

The protein localises to the plastid. It localises to the apicoplast. It is found in the membrane. It carries out the reaction S-sulfanyl-L-cysteinyl-[protein] + uridine(34) in tRNA + AH2 + ATP = 2-thiouridine(34) in tRNA + L-cysteinyl-[protein] + A + AMP + diphosphate + H(+). Functionally, catalyzes the 2-thiolation of uridine at the wobble position (U34) of tRNA, leading to the formation of s(2)U34. Required for apicoplast maintenance. The chain is Putative tRNA-specific 2-thiouridylase from Plasmodium falciparum (isolate 3D7).